Consider the following 228-residue polypeptide: Archaeal flagellar ATP-binding protein FlaH (228 aa).

Positions 30, 31, 33, 34, 35, 57, and 191 each coordinate ATP. Serine 34 contacts Mg(2+). A Mg(2+)-binding site is contributed by glutamate 57.

The protein belongs to the FlaH family. In terms of assembly, the S.acidocaldarius archaellum assembly machinery and its filament consist of seven proteins (FlaB, FlaF, FlaG, FlaH, FlaI, FlaJ and FlaX). Interacts directly with the FlaX ring and the motor ATPase FlaI. Monomers, which can probably form homohexamers upon binding to ATP. In vitro, FlaH assembles as a second ring inside the FlaX ring.

Its subcellular location is the archaeal flagellum. The protein resides in the cytoplasm. Its function is as follows. Component of the archaellum. FlaX, FlaH and FlaI form the core cytoplasmic motor complex of the crenarchaeal archaellum. FlaH binds ATP with high affinity but lacks detectable in vitro ATPase activity. ATP binding is essential for interaction with FlaI and for archaellum assembly. This Sulfolobus acidocaldarius (strain ATCC 33909 / DSM 639 / JCM 8929 / NBRC 15157 / NCIMB 11770) protein is Archaeal flagellar ATP-binding protein FlaH.